The sequence spans 1090 residues: DNA damage-binding protein 1 (1090 aa).

Belongs to the DDB1 family. In terms of assembly, component of the UV-DDB complex, which is composed of DDB1 and DDB2. In terms of tissue distribution, expressed in proliferating tissues. Highly expressed in shoot apical meristem (SAM). Expressed in roots, young leaves, flag leaves, and panicles. Not detected in mature leaves.

Its subcellular location is the nucleus. Required for DNA repair. Binds to DDB2 to form the UV-damaged DNA-binding protein complex (the UV-DDB complex). The UV-DDB complex may recognize UV-induced DNA damage and recruit proteins of the nucleotide excision repair pathway (the NER pathway) to initiate DNA repair. May function as the substrate recognition module for a DCX (DDB1-CUL4-X-box) E3 ubiquitin-protein ligase complex. The chain is DNA damage-binding protein 1 from Oryza sativa subsp. japonica (Rice).